We begin with the raw amino-acid sequence, 370 residues long: F-box/kelch-repeat protein At4g38940 (370 aa).

In terms of domain architecture, F-box spans 18–64 (PCLISLLPEEIVVDIVARVPRCYYPTLSQVSRRFRSLVASPEIYKRR). 3 Kelch repeats span residues 131-177 (NIFV…LIDR), 178-230 (KIYV…VIGG), and 263-315 (SACV…SYTG).

In terms of assembly, part of a SCF (ASK-cullin-F-box) protein ligase complex. Interacts with SKP1A/ASK1, SKP1B/ASK2, ASK11, ASK13 and ASK18.

It is found in the nucleus. It functions in the pathway protein modification; protein ubiquitination. Its function is as follows. Component of SCF(ASK-cullin-F-box) E3 ubiquitin ligase complexes, which may mediate the ubiquitination and subsequent proteasomal degradation of target proteins. This is F-box/kelch-repeat protein At4g38940 from Arabidopsis thaliana (Mouse-ear cress).